A 356-amino-acid polypeptide reads, in one-letter code: 1-deoxy-D-xylulose 5-phosphate reductoisomerase (356 aa).

The NADPH site is built by Thr-7, Gly-8, Ser-9, Ile-10, Gly-31, Asn-33, and Asn-111. Lys-112 contacts 1-deoxy-D-xylulose 5-phosphate. Glu-113 provides a ligand contact to NADPH. Residue Asp-131 coordinates Mn(2+). 4 residues coordinate 1-deoxy-D-xylulose 5-phosphate: Ser-132, Glu-133, Ser-155, and His-178. Mn(2+) is bound at residue Glu-133. Gly-184 contributes to the NADPH binding site. 1-deoxy-D-xylulose 5-phosphate is bound by residues Ser-191, Asn-196, Lys-197, and Glu-200. Mn(2+) is bound at residue Glu-200.

The protein belongs to the DXR family. Mg(2+) is required as a cofactor. The cofactor is Mn(2+).

It catalyses the reaction 2-C-methyl-D-erythritol 4-phosphate + NADP(+) = 1-deoxy-D-xylulose 5-phosphate + NADPH + H(+). The protein operates within isoprenoid biosynthesis; isopentenyl diphosphate biosynthesis via DXP pathway; isopentenyl diphosphate from 1-deoxy-D-xylulose 5-phosphate: step 1/6. Functionally, catalyzes the NADPH-dependent rearrangement and reduction of 1-deoxy-D-xylulose-5-phosphate (DXP) to 2-C-methyl-D-erythritol 4-phosphate (MEP). The chain is 1-deoxy-D-xylulose 5-phosphate reductoisomerase from Campylobacter jejuni subsp. doylei (strain ATCC BAA-1458 / RM4099 / 269.97).